The primary structure comprises 85 residues: UPF0512 protein U (85 aa).

It belongs to the UPF0512 family.

This Dictyostelium discoideum (Social amoeba) protein is UPF0512 protein U.